The primary structure comprises 74 residues: MKTLQCDICRKEVDNSLPERLYWTFREYDVCEDCKESIEDKLRPIIRTHQPYSQGWYENQFMGMVQRGVSNRRP.

This is an uncharacterized protein from Treponema pallidum (strain Nichols).